We begin with the raw amino-acid sequence, 374 residues long: Patatin-2-Kuras 4 (374 aa).

The signal sequence occupies residues 1 to 11 (MILATTSSTCA). One can recognise a PNPLA domain in the interval 20 to 217 (LSIDGGGIKG…TVGDPALLSL (198 aa)). A GXGXXG motif is present at residues 24–29 (GGGIKG). Positions 63–67 (GTSTG) match the GXSXG motif. Ser65 acts as the Nucleophile in catalysis. Asn103 carries N-linked (GlcNAc...) asparagine glycosylation. Catalysis depends on Asp203, which acts as the Proton acceptor. Residues 203–205 (DGG) carry the DGA/G motif. Residues 309–372 (ENALTGTTTE…DRKKLRANKA (64 aa)) adopt a coiled-coil conformation.

This sequence belongs to the patatin family.

It localises to the vacuole. In terms of biological role, probable lipolytic acyl hydrolase (LAH), an activity which is thought to be involved in the response of tubers to pathogens. This Solanum tuberosum (Potato) protein is Patatin-2-Kuras 4 (pat2-k4).